A 277-amino-acid chain; its full sequence is MENNKTSVDSKSINNFEVKTIHGSKSVDSGIYLDSSYKMDYPEMGICIIINNKNFHKSTGMSSRSGTDVDAANLRETFMGLKYQVRNKNDLTREDILELMDSVSKEDHSKRSSFVCVILSHGDEGVIYGTNGPVELKKLTSFFRGDYCRSLTGKPKLFIIQACRGTELDCGIETDSGTDEEMACQKIPVEADFLYAYSTAPGYYSWRNSKDGSWFIQSLCSMLKLYAHKLEFMHILTRVNRKVATEFESFSLDSTFHAKKQIPCIVSMLTKELYFYH.

An N-acetylmethionine modification is found at methionine 1. 2 propeptides span residues 1–9 (MENNKTSVD) and 10–28 (SKSINNFEVKTIHGSKSVD). The residue at position 11 (lysine 11) is an N6-acetyllysine. Serine 26 bears the Phosphoserine mark. Residues histidine 121 and cysteine 163 contribute to the active site. Cysteine 163 carries the S-nitrosocysteine; in inhibited form modification.

This sequence belongs to the peptidase C14A family. Heterotetramer that consists of two anti-parallel arranged heterodimers, each one formed by a 17 kDa (p17) and a 12 kDa (p12) subunit. Interacts with BIRC6/bruce. Cleavage by granzyme B, caspase-6, caspase-8 and caspase-10 generates the two active subunits. Additional processing of the propeptides is likely due to the autocatalytic activity of the activated protease. Active heterodimers between the small subunit of caspase-7 protease and the large subunit of caspase-3 also occur and vice versa. In terms of processing, S-nitrosylated on its catalytic site cysteine in unstimulated cell lines and denitrosylated upon activation of the Fas apoptotic pathway, associated with an increase in intracellular caspase activity. Fas therefore activates caspase-3 not only by inducing the cleavage of the caspase zymogen to its active subunits, but also by stimulating the denitrosylation of its active site thiol. Post-translationally, ubiquitinated by BIRC6; this activity is inhibited by DIABLO/SMAC. As to expression, highest expression in spleen, lung, liver, kidney and heart. Lower expression in brain, skeletal muscle and testis.

The protein localises to the cytoplasm. It carries out the reaction Strict requirement for an Asp residue at positions P1 and P4. It has a preferred cleavage sequence of Asp-Xaa-Xaa-Asp-|- with a hydrophobic amino-acid residue at P2 and a hydrophilic amino-acid residue at P3, although Val or Ala are also accepted at this position.. Its activity is regulated as follows. Inhibited by BIRC6; following inhibition of BIRC6-caspase binding by DIABLO/SMAC, BIRC6 is subjected to caspase cleavage, leading to an increase in active caspases. Functionally, thiol protease that acts as a major effector caspase involved in the execution phase of apoptosis. Following cleavage and activation by initiator caspases (CASP8, CASP9 and/or CASP10), mediates execution of apoptosis by catalyzing cleavage of many proteins. At the onset of apoptosis, it proteolytically cleaves poly(ADP-ribose) polymerase PARP1 at a '216-Asp-|-Gly-217' bond. Cleaves and activates sterol regulatory element binding proteins (SREBPs) between the basic helix-loop-helix leucine zipper domain and the membrane attachment domain. Cleaves and activates caspase-6, -7 and -9 (CASP6, CASP7 and CASP9, respectively). Cleaves and inactivates interleukin-18 (IL18). Triggers cell adhesion in sympathetic neurons through RET cleavage. Cleaves IL-1 beta between an Asp and an Ala, releasing the mature cytokine which is involved in a variety of inflammatory processes. Cleaves and inhibits serine/threonine-protein kinase AKT1 in response to oxidative stress. Acts as an inhibitor of type I interferon production during virus-induced apoptosis by mediating cleavage of antiviral proteins CGAS, IRF3 and MAVS, thereby preventing cytokine overproduction. Also involved in pyroptosis by mediating cleavage and activation of gasdermin-E (GSDME). Cleaves XRCC4 and phospholipid scramblase proteins XKR4, XKR8 and XKR9, leading to promote phosphatidylserine exposure on apoptotic cell surface. Cleaves BIRC6 following inhibition of BIRC6-caspase binding by DIABLO/SMAC. The chain is Caspase-3 (Casp3) from Mus musculus (Mouse).